Here is a 445-residue protein sequence, read N- to C-terminus: ATP-dependent protease ATPase subunit HslU (445 aa).

ATP is bound by residues Ile-17, 59 to 64 (GVGKTE), Asp-254, Glu-319, and Arg-391.

This sequence belongs to the ClpX chaperone family. HslU subfamily. As to quaternary structure, a double ring-shaped homohexamer of HslV is capped on each side by a ring-shaped HslU homohexamer. The assembly of the HslU/HslV complex is dependent on binding of ATP.

Its subcellular location is the cytoplasm. Its function is as follows. ATPase subunit of a proteasome-like degradation complex; this subunit has chaperone activity. The binding of ATP and its subsequent hydrolysis by HslU are essential for unfolding of protein substrates subsequently hydrolyzed by HslV. HslU recognizes the N-terminal part of its protein substrates and unfolds these before they are guided to HslV for hydrolysis. This is ATP-dependent protease ATPase subunit HslU from Pseudomonas fluorescens (strain Pf0-1).